The following is a 234-amino-acid chain: Proteasome subunit alpha type-2 (234 aa).

The protein belongs to the peptidase T1A family. As to quaternary structure, the 26S proteasome consists of a 20S proteasome core and two 19S regulatory subunits. The 20S proteasome core is composed of 28 subunits that are arranged in four stacked rings, resulting in a barrel-shaped structure. The two end rings are each formed by seven alpha subunits, and the two central rings are each formed by seven beta subunits. The catalytic chamber with the active sites is on the inside of the barrel. Interacts with Rpn6.

Its subcellular location is the cytoplasm. The protein resides in the nucleus. In terms of biological role, the proteasome is a multicatalytic proteinase complex which is characterized by its ability to cleave peptides with Arg, Phe, Tyr, Leu, and Glu adjacent to the leaving group at neutral or slightly basic pH. The proteasome has an ATP-dependent proteolytic activity. The protein is Proteasome subunit alpha type-2 (Prosalpha2) of Drosophila melanogaster (Fruit fly).